We begin with the raw amino-acid sequence, 118 residues long: Ribosome-binding factor A (118 aa).

It belongs to the RbfA family. Monomer. Binds 30S ribosomal subunits, but not 50S ribosomal subunits or 70S ribosomes.

The protein resides in the cytoplasm. Its function is as follows. One of several proteins that assist in the late maturation steps of the functional core of the 30S ribosomal subunit. Associates with free 30S ribosomal subunits (but not with 30S subunits that are part of 70S ribosomes or polysomes). Required for efficient processing of 16S rRNA. May interact with the 5'-terminal helix region of 16S rRNA. The polypeptide is Ribosome-binding factor A (Shouchella clausii (strain KSM-K16) (Alkalihalobacillus clausii)).